We begin with the raw amino-acid sequence, 516 residues long: Glycosyltransferase-like protein gnt15 (516 aa).

Topologically, residues 1–24 (MSNFYNNNPRRNTFRLTERIKKKP) are cytoplasmic. Residues 25–45 (YQTLIVFILIFLFLYVFGPFG) traverse the membrane as a helical; Signal-anchor for type II membrane protein segment. Residues 46 to 516 (EKKSNNNNNN…NDNCLTREHW (471 aa)) are Extracellular-facing. Asparagine 152 carries an N-linked (GlcNAc...) asparagine glycan. Residues 199 to 250 (DTSNNNNNNNNNNNNNNNNNNNNNNNNNNNNNNNENNDNDNGNNNNNNDNEK) form a disordered region. A compositionally biased stretch (low complexity) spans 202-246 (NNNNNNNNNNNNNNNNNNNNNNNNNNNNNNNENNDNDNGNNNNNN). N-linked (GlcNAc...) asparagine glycans are attached at residues asparagine 386 and asparagine 412.

This sequence belongs to the glycosyltransferase 8 family. Highly divergent.

It is found in the membrane. May have a role in modulating cell adhesion and glycosylation. Essential for development. The protein is Glycosyltransferase-like protein gnt15 (gnt15) of Dictyostelium discoideum (Social amoeba).